The primary structure comprises 443 residues: D-serine dehydratase (443 aa).

Lysine 118 is modified (N6-(pyridoxal phosphate)lysine).

Belongs to the serine/threonine dehydratase family. DsdA subfamily. Monomer. Pyridoxal 5'-phosphate serves as cofactor.

It carries out the reaction D-serine = pyruvate + NH4(+). The polypeptide is D-serine dehydratase (Escherichia coli O17:K52:H18 (strain UMN026 / ExPEC)).